A 117-amino-acid chain; its full sequence is Large ribosomal subunit protein bL20 (117 aa).

The protein belongs to the bacterial ribosomal protein bL20 family.

Its function is as follows. Binds directly to 23S ribosomal RNA and is necessary for the in vitro assembly process of the 50S ribosomal subunit. It is not involved in the protein synthesizing functions of that subunit. The chain is Large ribosomal subunit protein bL20 from Thermomicrobium roseum (strain ATCC 27502 / DSM 5159 / P-2).